We begin with the raw amino-acid sequence, 298 residues long: N-acetylmuramic acid 6-phosphate etherase (298 aa).

The region spanning 55–218 is the SIS domain; sequence IHAQVSGGGR…STGLMIKSGK (164 aa). Glu-83 serves as the catalytic Proton donor. The active site involves Glu-114.

It belongs to the GCKR-like family. MurNAc-6-P etherase subfamily. As to quaternary structure, homodimer.

It catalyses the reaction N-acetyl-D-muramate 6-phosphate + H2O = N-acetyl-D-glucosamine 6-phosphate + (R)-lactate. It functions in the pathway amino-sugar metabolism; 1,6-anhydro-N-acetylmuramate degradation. It participates in amino-sugar metabolism; N-acetylmuramate degradation. The protein operates within cell wall biogenesis; peptidoglycan recycling. Specifically catalyzes the cleavage of the D-lactyl ether substituent of MurNAc 6-phosphate, producing GlcNAc 6-phosphate and D-lactate. Together with AnmK, is also required for the utilization of anhydro-N-acetylmuramic acid (anhMurNAc) either imported from the medium or derived from its own cell wall murein, and thus plays a role in cell wall recycling. This chain is N-acetylmuramic acid 6-phosphate etherase, found in Escherichia coli (strain SMS-3-5 / SECEC).